Reading from the N-terminus, the 197-residue chain is Lipoprotein LprI (197 aa).

An N-terminal signal peptide occupies residues Met-1–Ala-15. The N-palmitoyl cysteine moiety is linked to residue Cys-16. Cys-16 carries S-diacylglycerol cysteine lipidation.

The protein in the C-terminal section; belongs to the MliC family. As to quaternary structure, probably a homodimer. In terms of processing, glycosylated.

Its subcellular location is the cell membrane. It is found in the secreted. The protein resides in the cell wall. The protein localises to the cell surface. Functionally, strongly binds and inhibits lysozyme, may help bacteria survive in lysozyme-producing host cells such as monocyte-derived macrophages. The sequence is that of Lipoprotein LprI (lprI) from Mycobacterium bovis (strain ATCC BAA-935 / AF2122/97).